A 781-amino-acid chain; its full sequence is Mitogen-activated protein kinase 7 (781 aa).

Residues 1-27 (MAEPLKEDDGEDGSGEPPGPVKAEPAG) form a disordered region. Ala2 bears the N-acetylalanine mark. The segment at 2 to 77 (AEPLKEDDGE…VVSSARRRLT (76 aa)) is required for cytoplasmic targeting. Residues 55-347 (YEIIETIGNG…AAAALRHPFL (293 aa)) form the Protein kinase domain. Residues 61 to 69 (IGNGAYGVV) and Lys84 contribute to the ATP site. The segment at 78–139 (GQQVAIKKIP…FKSVYVVLDL (62 aa)) is required for binding to MAP2K5. A necessary for oligomerization region spans residues 140–406 (MESDLHQIIH…QQIRFQPSLQ (267 aa)). Residue Asp182 is the Proton acceptor of the active site. The TXY motif lies at 219–221 (TEY). Residues 402-708 (QPSLQPVASE…PKGSGAGYGV (307 aa)) are disordered. The segment at 407–781 (PVASEPGCPD…LADLPDLQEP (375 aa)) is may not be required for kinase activity; required to stimulate MEF2C activity. 2 stretches are compositionally biased toward pro residues: residues 433-445 (SPPP…PGPA) and 454-463 (QPPPPASEPA). Residues 476–486 (KAALKAALLKS) are compositionally biased toward low complexity. Basic and acidic residues-rich tracts occupy residues 502–519 (PEPR…EREE), 527–544 (RAKE…KERG), and 563–573 (DNDRSLLERWT). The Nuclear localization signal signature appears at 505 to 539 (RKPVTAQERQREREEKRRRRQERAKEREKRRQERE). Pro residues-rich tracts occupy residues 578 to 594 (PPAP…PPAG) and 601 to 614 (GPLP…PAPA). Composition is skewed to low complexity over residues 615–632 (AGPA…LAPQ) and 642–652 (GPSALSVLPYF). The span at 653–664 (PSGPPPPDPGGA) shows a compositional bias: pro residues. A compositionally biased stretch (polar residues) spans 668–685 (STSESPDVTLVTQQLSKS). The residue at position 685 (Ser685) is a Phosphoserine. At Thr698 the chain carries Phosphothreonine.

The protein belongs to the protein kinase superfamily. CMGC Ser/Thr protein kinase family. MAP kinase subfamily. In terms of assembly, interacts with MAP2K5. Forms oligomers. Interacts with MEF2A, MEF2C and MEF2D; the interaction phosphorylates the MEF2s and enhances transcriptional activity of MEF2A, MEF2C but not MEF2D. Interacts with SGK1. Interacts with PML. Interacts (via N-terminal half) with HSP90AB1-CDC37 chaperone complex in resting cells; the interaction is MAP2K5-independent and prevents MAPK7 from ubiquitination and proteasomal degradation. Interacts with STUB1/CHIP; the interaction is enhanced in the presence of IGF1 or MAP2K5 and promotes STUB1/CHIP E3 ligase activity. Mg(2+) is required as a cofactor. In terms of processing, dually phosphorylated on Thr-219 and Tyr-221, which activates the enzyme.

It localises to the cytoplasm. Its subcellular location is the nucleus. It is found in the PML body. The catalysed reaction is L-seryl-[protein] + ATP = O-phospho-L-seryl-[protein] + ADP + H(+). The enzyme catalyses L-threonyl-[protein] + ATP = O-phospho-L-threonyl-[protein] + ADP + H(+). Activated by tyrosine and threonine phosphorylation. Activated in response to hyperosmolarity, hydrogen peroxide, and epidermal growth factor (EGF). Plays a role in various cellular processes such as proliferation, differentiation and cell survival. The upstream activator of MAPK7 is the MAPK kinase MAP2K5. Upon activation, it translocates to the nucleus and phosphorylates various downstream targets including MEF2C. EGF activates MAPK7 through a Ras-independent and MAP2K5-dependent pathway. As part of the MAPK/ERK signaling pathway, acts as a negative regulator of apoptosis in cardiomyocytes via interaction with STUB1/CHIP and promotion of STUB1-mediated ubiquitination and degradation of ICER-type isoforms of CREM. May have a role in muscle cell differentiation. May be important for endothelial function and maintenance of blood vessel integrity. MAP2K5 and MAPK7 interact specifically with one another and not with MEK1/ERK1 or MEK2/ERK2 pathways. Phosphorylates SGK1 at Ser-78 and this is required for growth factor-induced cell cycle progression. Involved in the regulation of p53/TP53 by disrupting the PML-MDM2 interaction. This Bos taurus (Bovine) protein is Mitogen-activated protein kinase 7 (MAPK7).